A 192-amino-acid chain; its full sequence is Ion-translocating oxidoreductase complex subunit A (192 aa).

Helical transmembrane passes span 5-25, 39-59, 67-87, 102-122, 134-154, and 171-191; these read ILLL…FLGL, IGMG…AYLV, LGIE…VVQF, LLGI…VALL, IIYG…FASM, and SIAM…TGLV.

This sequence belongs to the NqrDE/RnfAE family. As to quaternary structure, the complex is composed of six subunits: RnfA, RnfB, RnfC, RnfD, RnfE and RnfG.

It localises to the cell inner membrane. Its function is as follows. Part of a membrane-bound complex that couples electron transfer with translocation of ions across the membrane. The chain is Ion-translocating oxidoreductase complex subunit A from Vibrio campbellii (strain ATCC BAA-1116).